The following is a 142-amino-acid chain: Nucleoside diphosphate kinase (142 aa).

The ATP site is built by lysine 10, phenylalanine 58, arginine 86, threonine 92, arginine 103, and asparagine 113. The active-site Pros-phosphohistidine intermediate is the histidine 116.

This sequence belongs to the NDK family. In terms of assembly, homotetramer. Mg(2+) serves as cofactor.

The protein localises to the cytoplasm. It catalyses the reaction a 2'-deoxyribonucleoside 5'-diphosphate + ATP = a 2'-deoxyribonucleoside 5'-triphosphate + ADP. The enzyme catalyses a ribonucleoside 5'-diphosphate + ATP = a ribonucleoside 5'-triphosphate + ADP. In terms of biological role, major role in the synthesis of nucleoside triphosphates other than ATP. The ATP gamma phosphate is transferred to the NDP beta phosphate via a ping-pong mechanism, using a phosphorylated active-site intermediate. The chain is Nucleoside diphosphate kinase from Ehrlichia chaffeensis (strain ATCC CRL-10679 / Arkansas).